Consider the following 188-residue polypeptide: NAD(P)H-quinone oxidoreductase subunit 6, chloroplastic (188 aa).

The next 5 membrane-spanning stretches (helical) occupy residues glycine 10–asparagine 30, isoleucine 32–valine 52, alanine 61–isoleucine 81, glycine 97–leucine 117, and phenylalanine 153–threonine 173.

This sequence belongs to the complex I subunit 6 family. NDH is composed of at least 16 different subunits, 5 of which are encoded in the nucleus.

It localises to the plastid. It is found in the chloroplast thylakoid membrane. It catalyses the reaction a plastoquinone + NADH + (n+1) H(+)(in) = a plastoquinol + NAD(+) + n H(+)(out). It carries out the reaction a plastoquinone + NADPH + (n+1) H(+)(in) = a plastoquinol + NADP(+) + n H(+)(out). In terms of biological role, NDH shuttles electrons from NAD(P)H:plastoquinone, via FMN and iron-sulfur (Fe-S) centers, to quinones in the photosynthetic chain and possibly in a chloroplast respiratory chain. The immediate electron acceptor for the enzyme in this species is believed to be plastoquinone. Couples the redox reaction to proton translocation, and thus conserves the redox energy in a proton gradient. In Psilotum nudum (Whisk fern), this protein is NAD(P)H-quinone oxidoreductase subunit 6, chloroplastic (ndhG).